The sequence spans 708 residues: Solute carrier family 15 member 1 (708 aa).

A helical membrane pass occupies residues 1–21; the sequence is MGMSKSYGCFGYPLSIFFIVV. The Extracellular portion of the chain corresponds to 22 to 53; sequence NEFCERFSYYGMRALLILYFRRFIGWDDNLST. Asn-50 carries N-linked (GlcNAc...) asparagine glycosylation. A helical transmembrane segment spans residues 54 to 74; the sequence is AIYHTFVALCYLTPILGALIA. Residues 75 to 82 lie on the Cytoplasmic side of the membrane; that stretch reads DSWLGKFK. A helical transmembrane segment spans residues 83-103; that stretch reads TIVSLSIVYTIGQAVTAVSSI. Over 104–118 the chain is Extracellular; the sequence is NDLTDYNKDGTPDNL. An N-linked (GlcNAc...) asparagine glycan is attached at Asn-117. A helical transmembrane segment spans residues 119 to 139; the sequence is SVHVALSMIGLALIALGTGGI. The Cytoplasmic portion of the chain corresponds to 140 to 161; that stretch reads KPCVSAFGGDQFEEGQEKQRNR. The helical transmembrane segment at 162-182 threads the bilayer; that stretch reads FFSIFYLAINAGSLISTIVTP. Over 183–198 the chain is Extracellular; the sequence is MLRVHECGIYSQKACY. Residues 199 to 219 traverse the membrane as a helical segment; the sequence is PLAFGVPAALMAVSLIVFVIG. Over 220–276 the chain is Cytoplasmic; it reads SGMYKKFQPQGNVMGKVVKCIGFALKNRFRHRSKQFPKREHWLDWAKEKYDERLISQ. The chain crosses the membrane as a helical span at residues 277 to 297; sequence IKMVTKVMFLYIPLPMFWALF. The Extracellular portion of the chain corresponds to 298 to 327; it reads DQQGSRWTLQATAMSGKIGLLEVQPDQMQT. A helical transmembrane segment spans residues 328-348; the sequence is VNAILIVVMVPIMDAVVYPLI. Residues 349–361 are Cytoplasmic-facing; it reads AKCGFNFTSLKRM. A helical transmembrane segment spans residues 362 to 382; it reads TVGMFLASMAFVMAAIVQLEI. Residues 383–584 are Extracellular-facing; it reads DKTLPVFPKQ…ISPNTVNMAL (202 aa). Residues 383–585 are extracellular domain (ECD); it reads DKTLPVFPKQ…SPNTVNMALQ (203 aa). Residues Asn-408, Asn-439, Asn-495, Asn-499, Asn-509, Asn-514, Asn-527, and Asn-539 are each glycosylated (N-linked (GlcNAc...) asparagine). Residues 585-605 form a helical membrane-spanning segment; that stretch reads QIPQYFLITCGEVVFSVTGLE. Over 606-619 the chain is Cytoplasmic; it reads FSYSQAPSNMKSVL. A helical transmembrane segment spans residues 620–640; sequence QAGWLLTVAVGNIIVLIVAGA. Topologically, residues 641–645 are extracellular; the sequence is GQFSE. A helical membrane pass occupies residues 646–666; that stretch reads QWAEYILFAALLLVVCVIFAI. Over 667-708 the chain is Cytoplasmic; it reads MARFYTYVNPAEIEAQFDDDEKKNLEKMNVYSTVTPVSQTQM.

The protein belongs to the major facilitator superfamily. Proton-dependent oligopeptide transporter (POT/PTR) (TC 2.A.17) family. As to quaternary structure, interacts (via extracellular domain region) with trypsin.

Its subcellular location is the apical cell membrane. The catalysed reaction is a dipeptide(out) + H(+)(out) = a dipeptide(in) + H(+)(in). It carries out the reaction an L-amino acid tripeptide(out) + H(+)(out) = an L-amino acid tripeptide(in) + H(+)(in). It catalyses the reaction L-alanyl-L-lysine(out) + H(+)(out) = L-alanyl-L-lysine(in) + H(+)(in). The enzyme catalyses L-alanyl-L-proline(out) + H(+)(out) = L-alanyl-L-proline(in) + H(+)(in). The catalysed reaction is L-alanyl-L-valine(out) + H(+)(out) = L-alanyl-L-valine(in) + H(+)(in). It carries out the reaction carnosine(out) + H(+)(out) = carnosine(in) + H(+)(in). It catalyses the reaction glycyl-L-glutamine(out) + H(+)(out) = glycyl-L-glutamine(in) + H(+)(in). The enzyme catalyses glycyl-L-leucine(out) + H(+)(out) = glycyl-L-leucine(in) + H(+)(in). The catalysed reaction is glycyl-L-proline(out) + H(+)(out) = glycyl-L-proline(in) + H(+)(in). It carries out the reaction glycyl-sarcosine(out) + H(+)(out) = glycyl-sarcosine(in) + H(+)(in). It catalyses the reaction L-leucyl-L-leucine(out) + H(+)(out) = L-leucyl-L-leucine(in) + H(+)(in). The enzyme catalyses L-leucyl-L-proline(out) + H(+)(out) = L-leucyl-L-proline(in) + H(+)(in). The catalysed reaction is L-phenylalanyl-L-leucine(out) + H(+)(out) = L-phenylalanyl-L-leucine(in) + H(+)(in). It carries out the reaction L-phenylalanyl-L-phenylalanine(out) + H(+)(out) = L-phenylalanyl-L-phenylalanine(in) + H(+)(in). It catalyses the reaction L-lysyl-glycine(out) + H(+)(out) = L-lysyl-glycine(in) + H(+)(in). The enzyme catalyses L-tyrosylglycine(out) + H(+)(out) = L-tyrosylglycine(in) + H(+)(in). The catalysed reaction is L-alanyl-L-aspartate(out) + 2 H(+)(out) = L-alanyl-L-aspartate(in) + 2 H(+)(in). It carries out the reaction L-aspartyl-glycine(out) + 2 H(+)(out) = L-aspartyl-glycine(in) + 2 H(+)(in). It catalyses the reaction glycyl-L-aspartate(out) + 2 H(+)(out) = glycyl-L-aspartate(in) + 2 H(+)(in). The enzyme catalyses glycyl-L-glutamate(out) + 2 H(+)(out) = glycyl-L-glutamate(in) + 2 H(+)(in). The catalysed reaction is L-alanyl-L-leucyl-L-alanine(out) + H(+)(out) = L-alanyl-L-leucyl-L-alanine(in) + H(+)(in). It carries out the reaction L-alanyl-L-prolylglycine(out) + H(+)(out) = L-alanyl-L-prolylglycine(in) + H(+)(in). It catalyses the reaction glycylglycyl-L-isoleucine(out) + H(+)(out) = glycylglycyl-L-isoleucine(in) + H(+)(in). The enzyme catalyses glycylglycyl-L-proline(out) + H(+)(out) = glycylglycyl-L-proline(in) + H(+)(in). The catalysed reaction is L-methionyl-L-phenylalanyl-L-methionine(out) + H(+)(out) = L-methionyl-L-phenylalanyl-L-methionine(in) + H(+)(in). It carries out the reaction N-acetyl-D-muramoyl-L-alanyl-D-isoglutamine(out) + 2 H(+)(out) = N-acetyl-D-muramoyl-L-alanyl-D-isoglutamine(in) + 2 H(+)(in). It catalyses the reaction N(alpha)-formyl-L-methionyl-L-leucyl-L-phenylalanine(out) + 2 H(+)(out) = N(alpha)-formyl-L-methionyl-L-leucyl-L-phenylalanine(in) + 2 H(+)(in). Functionally, electrogenic proton-coupled amino-acid transporter that transports oligopeptides of 2 to 4 amino acids with a preference for dipeptides. Transports neutral and monovalently charged peptides with a proton to peptide stoichiometry of 1:1 or 2:1. Primarily responsible for the absorption of dietary di- and tripeptides from the small intestinal lumen. Mediates transepithelial transport of muramyl and N-formylated bacterial dipeptides contributing to recognition of pathogenic bacteria by the mucosal immune system. This is Solute carrier family 15 member 1 (SLC15A1) from Canis lupus familiaris (Dog).